A 149-amino-acid polypeptide reads, in one-letter code: Calmodulin (149 aa).

Alanine 2 carries the N-acetylalanine modification. EF-hand domains follow at residues 8-43 (EQIAEFKEAFSLFDKDGDGTITTKELGTVMRSLGQN), 44-79 (PTEAELADMINEVDADGNGTIDFPEFLTMMARKMKD), 81-116 (DSEEEILEAFKVFDKDGNGFISAAELRHIMTNLGEK), and 117-149 (LTDEEVDEMIREADIDGDGQINYEEFVKMMMSK). Positions 21, 23, 25, 27, 32, 57, 59, 61, 63, 68, 94, 96, 98, and 105 each coordinate Ca(2+). Residue lysine 116 is modified to N6,N6,N6-trimethyllysine. Residues aspartate 130, aspartate 132, aspartate 134, glutamine 136, and glutamate 141 each contribute to the Ca(2+) site.

This sequence belongs to the calmodulin family.

Its function is as follows. Calmodulin mediates the control of a large number of enzymes, ion channels and other proteins by Ca(2+). Among the enzymes to be stimulated by the calmodulin-Ca(2+) complex are a number of protein kinases and phosphatases. This is Calmodulin (cam) from Saccharina japonica (Sweet kelp).